Consider the following 551-residue polypeptide: Endolytic murein transglycosylase (551 aa).

Over 1 to 187 (MSEKSREEEK…PKKEKKSHVK (187 aa)) the chain is Cytoplasmic. The disordered stretch occupies residues 38–180 (VRTPANEPSA…EGAKPAKPKK (143 aa)). Composition is skewed to low complexity over residues 100–110 (PSSPAEESGSR) and 145–157 (QAGPETPTPATET). Residues 159-174 (DIIRDTSRRSRREGAK) are compositionally biased toward basic and acidic residues. A helical membrane pass occupies residues 188-208 (AFVISFLVFLALLSAGGYFGY). Topologically, residues 209–551 (QYVLDSLLPI…VAEHVNSKLN (343 aa)) are extracellular.

This sequence belongs to the transglycosylase MltG family. As to quaternary structure, interacts with RodZ. Interacts with MreC in the elongasome; interaction is strongly reduced when the 90 C-terminal residues of MreC are missing. Interacts with KhpB (also called EloR/Jag) via MltG's N-terminus, suggesting the N-terminus of MltG is cytoplasmic.

The protein localises to the cell membrane. The enzyme catalyses a peptidoglycan chain = a peptidoglycan chain with N-acetyl-1,6-anhydromuramyl-[peptide] at the reducing end + a peptidoglycan chain with N-acetylglucosamine at the non-reducing end.. In terms of biological role, functions as a peptidoglycan terminase that cleaves nascent peptidoglycan strands endolytically to terminate their elongation. Functionally, mutations in this gene suppress deletion of PBP2b (penA); truncation at residue 168, undefined changes between residue Ile-447 and Ala-505, and mutation of Ala-505 suppress the penA deletion. Probably part of the elongasome which synthesizes peripheral peptidoglycan. The protein is Endolytic murein transglycosylase of Streptococcus pneumoniae (strain ATCC BAA-255 / R6).